The following is a 590-amino-acid chain: Probable lysine-specific demethylase 4B (590 aa).

A JmjN domain is found at 9 to 51 (IKVFRPTWEEFKDFPKYVAYMESQGAHKAGLAKVVPPPEWVPR). Tyrosine 130 is a binding site for 2-oxoglutarate. Residues 140 to 306 (DTDQDSWNIN…YGKRAVQCTC (167 aa)) form the JmjC domain. Fe cation-binding residues include histidine 186 and glutamate 188. Positions 196 and 204 each coordinate 2-oxoglutarate. Zn(2+) is bound by residues cysteine 232 and histidine 238. Position 239 (lysine 239) interacts with 2-oxoglutarate. Histidine 274 is a binding site for Fe cation. Cysteine 304 and cysteine 306 together coordinate Zn(2+). Disordered regions lie at residues 372–395 (PTKAKSFKERNPDLDLDEIQQNPN) and 417–590 (ATDE…TASP). Positions 445-458 (EYIDDGTEDDDEEE) are enriched in acidic residues. Residues 480–494 (SKRKTNSRNNRGRSP) are compositionally biased toward basic residues. Composition is skewed to low complexity over residues 502–513 (ISPASSTSSTSR) and 537–571 (TTSPAVSSAATAVKTPTSAVVAGTTSIATTTTPPA).

The protein belongs to the JHDM3 histone demethylase family. The cofactor is Fe(2+).

Its subcellular location is the nucleus. It catalyses the reaction N(6),N(6),N(6)-trimethyl-L-lysyl(9)-[histone H3] + 2 2-oxoglutarate + 2 O2 = N(6)-methyl-L-lysyl(9)-[histone H3] + 2 formaldehyde + 2 succinate + 2 CO2. Its function is as follows. Probable histone demethylase that specifically demethylates 'Lys-9' and 'Lys-36' residues of histone H3, thereby playing a central role in histone code. Demethylation of Lys residue generates formaldehyde and succinate. In Drosophila melanogaster (Fruit fly), this protein is Probable lysine-specific demethylase 4B (Kdm4B).